Here is a 1517-residue protein sequence, read N- to C-terminus: uncharacterized protein (1517 aa).

The segment covering 1–13 has biased composition (polar residues); that stretch reads MNQFPNQPGNFGQ. A disordered region spans residues 1–26; it reads MNQFPNQPGNFGQNYYKPVQGSIPAN. N-linked (GlcNAc...) asparagine glycans are attached at residues Asn35, Asn40, and Asn76. Helical transmembrane passes span 231-251, 397-417, 510-530, 612-632, and 720-740; these read AIDF…AVPI, AIGL…TVWC, FVPL…KDWI, PNIV…FFAL, and VFDC…VVLL. Asn917 is a glycosylation site (N-linked (GlcNAc...) asparagine). 4 consecutive transmembrane segments (helical) span residues 956-976, 985-1005, 1051-1071, and 1114-1134; these read FVYA…VPPL, VPAF…VNSE, VKLD…AFWS, and GIGF…TYLL. An N-linked (GlcNAc...) asparagine glycan is attached at Asn1178. The helical transmembrane segment at 1261–1281 threads the bilayer; the sequence is PYALPLLDSGMVPVSTQLAIV. A glycan (N-linked (GlcNAc...) asparagine) is linked at Asn1321. The next 2 helical transmembrane spans lie at 1353–1373 and 1408–1428; these read APVV…TFEV and VVVV…PVVI.

The protein to S.pombe SpAC22F3.04.

The protein resides in the membrane. This is an uncharacterized protein from Schizosaccharomyces pombe (strain 972 / ATCC 24843) (Fission yeast).